A 413-amino-acid polypeptide reads, in one-letter code: Extracellular sucrase (413 aa).

The Nucleophile role is filled by aspartate 44. Glutamate 276 functions as the Proton donor/acceptor in the catalytic mechanism.

It belongs to the glycosyl hydrolase 68 family.

It is found in the secreted. The enzyme catalyses Hydrolysis of terminal non-reducing beta-D-fructofuranoside residues in beta-D-fructofuranosides.. The protein is Extracellular sucrase (sacC) of Zymomonas mobilis subsp. mobilis (strain ATCC 10988 / DSM 424 / LMG 404 / NCIMB 8938 / NRRL B-806 / ZM1).